Consider the following 551-residue polypeptide: Rhodopsin kinase grk7-a (551 aa).

Position 36 is a phosphoserine (Ser-36). The RGS domain maps to 57–174 (YQSICVEQPI…QNSPFYDRFL (118 aa)). The Protein kinase domain maps to 189–451 (FYEFRILGKG…DDDPRKHAFF (263 aa)). ATP is bound by residues 195-203 (LGKGGFGEV) and Lys-218. The Proton acceptor role is filled by Asp-314. In terms of domain architecture, AGC-kinase C-terminal spans 452–517 (KSINFQRLEA…GAIPISWQKE (66 aa)). Ser-487 bears the Phosphoserine mark. The interval 529–551 (DPSREATGGGGNSGEKSGVCSIL) is disordered. Residues 542 to 551 (GEKSGVCSIL) show a composition bias toward low complexity. The residue at position 548 (Cys-548) is a Cysteine methyl ester. The S-geranylgeranyl cysteine moiety is linked to residue Cys-548. Positions 549 to 551 (SIL) are cleaved as a propeptide — removed in mature form.

It belongs to the protein kinase superfamily. AGC Ser/Thr protein kinase family. GPRK subfamily. In terms of processing, autophosphorylated in vitro at Ser-487. Phosphorylation at Ser-36 is regulated by light and activated by cAMP.

The protein resides in the membrane. It catalyses the reaction L-threonyl-[rhodopsin] + ATP = O-phospho-L-threonyl-[rhodopsin] + ADP + H(+). The enzyme catalyses L-seryl-[rhodopsin] + ATP = O-phospho-L-seryl-[rhodopsin] + ADP + H(+). In terms of biological role, retina-specific kinase involved in the shutoff of the photoresponse and adaptation to changing light conditions via cone opsin phosphorylation, including rhodopsin (RHO). The sequence is that of Rhodopsin kinase grk7-a (grk7-a) from Xenopus laevis (African clawed frog).